The sequence spans 561 residues: AT-rich interactive domain-containing protein 3B (561 aa).

At methionine 1 the chain carries N-acetylmethionine. Residues 1-17 (MEPLQQQQQQQQQQQKQ) are compositionally biased toward low complexity. Disordered regions lie at residues 1 to 36 (MEPL…QQMR), 53 to 122 (LSAT…SKYF), and 136 to 179 (PMSN…WNLD). Serine 89 carries the phosphoserine modification. Positions 90 to 109 (EPEEEDGGLEDEDGDDEVAE) are enriched in acidic residues. Over residues 152–162 (QAKEDHTKDAS) the composition is skewed to basic and acidic residues. A compositionally biased stretch (polar residues) spans 164-178 (ASPSVSTAGQPNWNL). Phosphoserine is present on serine 165. The interaction with RB1 stretch occupies residues 203-365 (SRDFAKLYEL…SPPKIRFPIL (163 aa)). The region spanning 215–307 (DPERKEFLDD…YLYAYECEKK (93 aa)) is the ARID domain. Serine 311 carries the phosphoserine modification. The residue at position 361 (arginine 361) is an Asymmetric dimethylarginine. The segment at 370–397 (SSGTNTSSPRISPATTLRKGDGAPVTTV) is disordered. Positions 419 to 517 (AALEQLRERL…GVLFAQKPVV (99 aa)) constitute an REKLES domain. The tract at residues 490 to 513 (SSIGSINMSVDIDGTTYAGVLFAQ) is interaction with ARID3A. The segment covering 523–552 (SAPQSLGSSASSSSSSHCSPSPTSSRGTPS) has biased composition (low complexity). Positions 523-561 (SAPQSLGSSASSSSSSHCSPSPTSSRGTPSAEPSTSWSL) are disordered.

In terms of assembly, heterodimer with ARID3A. Interacts with unphosphorylated RB1. As to expression, expressed in placenta, testis and leukocytes. Expressed in neuroblastoma. Present in K-562 erythrocytic leukemia cell line (at protein level).

The protein localises to the nucleus. Transcription factor which may be involved in neuroblastoma growth and malignant transformation. Favors nuclear targeting of ARID3A. The sequence is that of AT-rich interactive domain-containing protein 3B (ARID3B) from Homo sapiens (Human).